The following is a 70-amino-acid chain: MDQLERRIEDLEMKLAFQEGTIEELDQQVIKLNDLMAAQQQQLRILITKLQSVEPSNMANQSEESPPPHY.

The protein belongs to the SlyX family.

The chain is Protein SlyX homolog from Shewanella sediminis (strain HAW-EB3).